A 101-amino-acid polypeptide reads, in one-letter code: MFDQTTNTEVHQLTVGKIETANGTIKPQLLRDAVKRAVTNFFAQLDGQEAQEVYEMVLSEVEAPLLDIIMQHTRGNQTRAANMLGINRGTLRKKLKKYGMN.

The segment at residues 77-96 is a DNA-binding region (H-T-H motif); the sequence is QTRAANMLGINRGTLRKKLK.

This sequence belongs to the transcriptional regulatory Fis family. As to quaternary structure, homodimer.

Its function is as follows. Activates ribosomal RNA transcription. Plays a direct role in upstream activation of rRNA promoters. This is DNA-binding protein Fis from Shewanella baltica (strain OS223).